The chain runs to 61 residues: UPF0181 protein Ent638_2380 (61 aa).

Belongs to the UPF0181 family.

The chain is UPF0181 protein Ent638_2380 from Enterobacter sp. (strain 638).